Reading from the N-terminus, the 446-residue chain is MKFIPHTDEERRQMLKHLAVENTDQLFKDIPSELRLNRDLAVEGGLSEMELQSHMNSLAGLNTGVDQTICFLGAGAYDHYIPSAVKHILSRSEFYTAYTPYQPEISQGVLQSIFEYQSMICLLTGMDAANASMYDGASALAEAALMACAVTRRDKVLVASTLHPEYREVVKTYLHGPGIEISEIAYQEGLSQLADIDQKLDKKTAAVLVQYPNFFGCIEDLGKIAEQAHAKGALLVVCVDPIALGILKSPGQCGADIVVGEGQSLGIPLSYGGPYLGFMACKDKYLRKMPGRIVGQTVDVEGRRGYVLTLQAREQHIRRDKATSNICSNQALCALAATVYLSLVGRQGFKQVAELCLQKTAYAKELLAALPGYQLPWQTPVFKEFVLKTKEAPEVINRELLKENILGGLDLGGYYPELAGHMLFCVTEKRSRREIELLAARLGAIS.

It belongs to the GcvP family. N-terminal subunit subfamily. The glycine cleavage system is composed of four proteins: P, T, L and H. In this organism, the P 'protein' is a heterodimer of two subunits.

The catalysed reaction is N(6)-[(R)-lipoyl]-L-lysyl-[glycine-cleavage complex H protein] + glycine + H(+) = N(6)-[(R)-S(8)-aminomethyldihydrolipoyl]-L-lysyl-[glycine-cleavage complex H protein] + CO2. Its function is as follows. The glycine cleavage system catalyzes the degradation of glycine. The P protein binds the alpha-amino group of glycine through its pyridoxal phosphate cofactor; CO(2) is released and the remaining methylamine moiety is then transferred to the lipoamide cofactor of the H protein. This chain is Probable glycine dehydrogenase (decarboxylating) subunit 1, found in Desulforamulus reducens (strain ATCC BAA-1160 / DSM 100696 / MI-1) (Desulfotomaculum reducens).